A 153-amino-acid chain; its full sequence is Glucose-6-phosphate 1-dehydrogenase (153 aa).

Residues R21 and K120 each contribute to the NADP(+) site. A D-glucose 6-phosphate-binding site is contributed by K120.

The protein belongs to the glucose-6-phosphate dehydrogenase family.

Its subcellular location is the cytoplasm. The protein resides in the cytosol. The enzyme catalyses D-glucose 6-phosphate + NADP(+) = 6-phospho-D-glucono-1,5-lactone + NADPH + H(+). It participates in carbohydrate degradation; pentose phosphate pathway; D-ribulose 5-phosphate from D-glucose 6-phosphate (oxidative stage): step 1/3. Cytosolic glucose-6-phosphate dehydrogenase that catalyzes the first and rate-limiting step of the oxidative branch within the pentose phosphate pathway/shunt, an alternative route to glycolysis for the dissimilation of carbohydrates and a major source of reducing power and metabolic intermediates for fatty acid and nucleic acid biosynthetic processes. The sequence is that of Glucose-6-phosphate 1-dehydrogenase (Zw) from Drosophila simulans (Fruit fly).